A 242-amino-acid chain; its full sequence is Putative serine/threonine-protein kinase (242 aa).

Residues 49–242 (FSSKNKVGEG…KSDVYSFGVL (194 aa)) form the Protein kinase domain. ATP is bound by residues 55–63 (VGEGGCGAV) and Lys-77. Asp-177 acts as the Proton acceptor in catalysis.

It belongs to the protein kinase superfamily. Ser/Thr protein kinase family.

It carries out the reaction L-seryl-[protein] + ATP = O-phospho-L-seryl-[protein] + ADP + H(+). The enzyme catalyses L-threonyl-[protein] + ATP = O-phospho-L-threonyl-[protein] + ADP + H(+). The sequence is that of Putative serine/threonine-protein kinase from Helianthus annuus (Common sunflower).